The chain runs to 125 residues: MADLAKIEEQLSSLTLMQAAELVKMLEEKWGVSAAAPVAVAAAGAAAPAAEAAAEKTEFEIVLMAAGDKKVEVIKVVKDITGLGLIEAKKLVDEAPKPMKSNVKKAEAEEIKGKLEAAGAKVELK.

This sequence belongs to the bacterial ribosomal protein bL12 family. Homodimer. Part of the ribosomal stalk of the 50S ribosomal subunit. Forms a multimeric L10(L12)X complex, where L10 forms an elongated spine to which 2 to 4 L12 dimers bind in a sequential fashion. Binds GTP-bound translation factors.

In terms of biological role, forms part of the ribosomal stalk which helps the ribosome interact with GTP-bound translation factors. Is thus essential for accurate translation. The sequence is that of Large ribosomal subunit protein bL12 from Rickettsia felis (strain ATCC VR-1525 / URRWXCal2) (Rickettsia azadi).